Reading from the N-terminus, the 228-residue chain is UPF0758 protein STER_1430 (228 aa).

Positions 103–225 (QIMSSQQVAR…YYSFREERED (123 aa)) constitute an MPN domain. Zn(2+)-binding residues include histidine 174, histidine 176, and aspartate 187. The short motif at 174–187 (HNHPSGEAYPSRND) is the JAMM motif element.

This sequence belongs to the UPF0758 family.

This is UPF0758 protein STER_1430 from Streptococcus thermophilus (strain ATCC BAA-491 / LMD-9).